We begin with the raw amino-acid sequence, 977 residues long: Glutamate receptor 2 (977 aa).

Positions 1 to 19 (MNKNLLVFGFLIFVKIGET) are cleaved as a signal peptide. The Extracellular portion of the chain corresponds to 20-621 (SKKFPLRAFV…FSFMEPLGMT (602 aa)). N-linked (GlcNAc...) asparagine glycans are attached at residues Asn36, Asn227, Asn291, Asn427, Asn532, and Asn566. The chain crosses the membrane as a helical span at residues 622–642 (IWIFTLSSYFGVSLTIFLVSW). The Cytoplasmic segment spans residues 643–695 (FSPYEKRIEFKRGEFTVTNEFTLYNSLWFTLAAFMQQGTDILPRAVSGRIASS). Residues 696–716 (CWWFFTLIIVSSYTANLAAFL) traverse the membrane as a helical segment. Topologically, residues 717–898 (TLERMTPPIE…GTSSSLNLSK (182 aa)) are extracellular. Asn783 and Asn895 each carry an N-linked (GlcNAc...) asparagine glycan. The chain crosses the membrane as a helical span at residues 899–919 (VAGIFYILLAGMVLSMCTALV). The Cytoplasmic segment spans residues 920 to 977 (EFLFRKNKENREKERNRMRSSRPLKPGILASCERAKQKQLQNRRTKSEEVSTPRSTLF). Residues 954 to 977 (AKQKQLQNRRTKSEEVSTPRSTLF) are disordered.

It belongs to the glutamate-gated ion channel (TC 1.A.10.1) family. In terms of tissue distribution, command interneurons of the locomotory control circuit (AIA, AIB, AVA, AVD, AVE, PVC, RIA, RIG and RIR) and motor neurons (AVG, M1, RMDD and RMDV).

It is found in the membrane. Its subcellular location is the postsynaptic cell membrane. Its function is as follows. L-glutamate acts as an excitatory neurotransmitter at many synapses in the central nervous system. The postsynaptic actions of glutamate are mediated by a variety of receptors that are named according to their selective agonists. Required for response to mechanical and osmotic stimuli. This chain is Glutamate receptor 2 (glr-2), found in Caenorhabditis elegans.